The primary structure comprises 127 residues: Large-conductance mechanosensitive channel (127 aa).

The next 3 membrane-spanning stretches (helical) occupy residues 9 to 29 (EFAMRGNVIDLAVAVVMGVAF), 32 to 52 (IVTALVDGIIMPCVGLLLGGI), and 75 to 95 (VIDFIIVAFAIFVLIKLINLL).

This sequence belongs to the MscL family. Homopentamer.

It is found in the cell inner membrane. In terms of biological role, channel that opens in response to stretch forces in the membrane lipid bilayer. May participate in the regulation of osmotic pressure changes within the cell. This Legionella pneumophila (strain Paris) protein is Large-conductance mechanosensitive channel.